A 100-amino-acid chain; its full sequence is Integration host factor subunit alpha (100 aa).

Belongs to the bacterial histone-like protein family. As to quaternary structure, heterodimer of an alpha and a beta chain.

Functionally, this protein is one of the two subunits of integration host factor, a specific DNA-binding protein that functions in genetic recombination as well as in transcriptional and translational control. The sequence is that of Integration host factor subunit alpha from Phenylobacterium zucineum (strain HLK1).